Reading from the N-terminus, the 341-residue chain is MKVKDFDFYLPEELIAQHPIEKRDEARLLVLDKETGEIEHKIFKDILDYLTPNDCLVLNNTRVLPARLIGAKEETGGKMEFLLLKRKEKDVWETLVKPGKRAQIGARFIFGNGELKAEVIGMGEEGSRIVKFYYEGIFEEILDQLGQMPLPPYIKEKLDDKEMYQTVYSKEEGSAAAPTAGLHFTEELLKKIEEKGVKLAFLTLHVGLGTFRPVKVEDIQEHVMHSEYYKMDKKTAEIINDTKENGGRVIAVGTTSCRTLETIGAIEGKVGEQSGWTDIFIYPGYKYKVVDALITNFHLPQSTLLMLVSALAGRDNIMNAYNVAVEKEYRFFSFGDAMFIK.

This sequence belongs to the QueA family. As to quaternary structure, monomer.

Its subcellular location is the cytoplasm. The enzyme catalyses 7-aminomethyl-7-carbaguanosine(34) in tRNA + S-adenosyl-L-methionine = epoxyqueuosine(34) in tRNA + adenine + L-methionine + 2 H(+). It functions in the pathway tRNA modification; tRNA-queuosine biosynthesis. In terms of biological role, transfers and isomerizes the ribose moiety from AdoMet to the 7-aminomethyl group of 7-deazaguanine (preQ1-tRNA) to give epoxyqueuosine (oQ-tRNA). The chain is S-adenosylmethionine:tRNA ribosyltransferase-isomerase from Clostridium botulinum (strain ATCC 19397 / Type A).